Consider the following 216-residue polypeptide: Large ribosomal subunit protein uL24m (216 aa).

The transit peptide at 1–9 (MRLSALLAL) directs the protein to the mitochondrion. Serine 24 bears the Phosphoserine mark. Residues 56–89 (LFCGDTVEILEGKDAGKQGKVVQVIRQRNWVVVG) enclose the KOW domain.

It belongs to the universal ribosomal protein uL24 family. As to quaternary structure, component of the mitochondrial large ribosomal subunit (mt-LSU). Mature mammalian 55S mitochondrial ribosomes consist of a small (28S) and a large (39S) subunit. The 28S small subunit contains a 12S ribosomal RNA (12S mt-rRNA) and 30 different proteins. The 39S large subunit contains a 16S rRNA (16S mt-rRNA), a copy of mitochondrial valine transfer RNA (mt-tRNA(Val)), which plays an integral structural role, and 52 different proteins.

It localises to the mitochondrion. In Homo sapiens (Human), this protein is Large ribosomal subunit protein uL24m (MRPL24).